Here is a 359-residue protein sequence, read N- to C-terminus: MAGPPGDDIFRATLAAVAPGTPFRDGLERILRGHTGALIVLGHDKVVEGLCTGGFELDVEFSATRLRELAKMDGAIVLSSDLQRIVRAAVHLVPDPTVPTEESGTRHRTAERVAKQAEFPVISVSQSMHIIALYVAGRRYVLDGSAAILSRANQALATLERYKLRLDEVAGTLSALEIEDLVTVRDAISVSQRLEMVRRIADEIEGYVVELGTDGRLLSLQLEELMAGVETERELTVRDYLPIGSKAGTPAQVLGELSAMSPTDLLDLTVLARVIGFSGGADILDRQISPRGYRMLAKVPRLPRMVVDRLVDHFGTLQKLLAAGVDDLQAVDGVGETRARAVREGLSRLAESSILERYV.

The 140-residue stretch at 7-146 folds into the DAC domain; the sequence is DDIFRATLAA…GRRYVLDGSA (140 aa). Residues Gly74, Leu92, and 105–109 contribute to the ATP site; that span reads TRHRT.

It belongs to the DisA family. As to quaternary structure, homooctamer. It depends on Mg(2+) as a cofactor.

It catalyses the reaction 2 ATP = 3',3'-c-di-AMP + 2 diphosphate. Participates in a DNA-damage check-point that is active prior to asymmetric division when DNA is damaged. DisA forms globular foci that rapidly scan along the chromosomes during sporulation, searching for lesions. When a lesion is present, DisA pauses at the lesion site. This triggers a cellular response that culminates in a temporary block in sporulation initiation. Functionally, also has diadenylate cyclase activity, catalyzing the condensation of 2 ATP molecules into cyclic di-AMP (c-di-AMP). c-di-AMP acts as a signaling molecule that couples DNA integrity with progression of sporulation. The rise in c-di-AMP level generated by DisA while scanning the chromosome, operates as a positive signal that advances sporulation; upon encountering a lesion, the DisA focus arrests at the damaged site and halts c-di-AMP synthesis. This is DNA integrity scanning protein DisA from Frankia casuarinae (strain DSM 45818 / CECT 9043 / HFP020203 / CcI3).